We begin with the raw amino-acid sequence, 154 residues long: Large-conductance mechanosensitive channel (154 aa).

2 helical membrane passes run 12–32 (GNIVDLAVAVVIGTAFTALIT) and 71–91 (IVLSAAINFLLIALVVYFLVV). The disordered stretch occupies residues 129-154 (NGAPSGRHVDTADLTPTPNHEPRADT).

This sequence belongs to the MscL family. In terms of assembly, homopentamer.

It localises to the cell membrane. Channel that opens in response to stretch forces in the membrane lipid bilayer. May participate in the regulation of osmotic pressure changes within the cell. In Mycobacterium leprae (strain Br4923), this protein is Large-conductance mechanosensitive channel.